Consider the following 156-residue polypeptide: Small ribosomal subunit protein uS7 (156 aa).

This sequence belongs to the universal ribosomal protein uS7 family. As to quaternary structure, part of the 30S ribosomal subunit. Contacts proteins S9 and S11.

Functionally, one of the primary rRNA binding proteins, it binds directly to 16S rRNA where it nucleates assembly of the head domain of the 30S subunit. Is located at the subunit interface close to the decoding center, probably blocks exit of the E-site tRNA. The sequence is that of Small ribosomal subunit protein uS7 from Anaeromyxobacter sp. (strain Fw109-5).